A 229-amino-acid chain; its full sequence is Urease accessory protein UreF (229 aa).

This sequence belongs to the UreF family. As to quaternary structure, ureD, UreF and UreG form a complex that acts as a GTP-hydrolysis-dependent molecular chaperone, activating the urease apoprotein by helping to assemble the nickel containing metallocenter of UreC. The UreE protein probably delivers the nickel.

The protein resides in the cytoplasm. In terms of biological role, required for maturation of urease via the functional incorporation of the urease nickel metallocenter. This chain is Urease accessory protein UreF, found in Staphylococcus aureus (strain bovine RF122 / ET3-1).